Consider the following 342-residue polypeptide: Farnesyl pyrophosphate synthase (342 aa).

Isopentenyl diphosphate is bound by residues Lys47, Arg50, and Gln86. 2 residues coordinate Mg(2+): Asp93 and Asp97. Arg102 contributes to the dimethylallyl diphosphate binding site. Residue Arg103 coordinates isopentenyl diphosphate. Dimethylallyl diphosphate is bound by residues Lys190, Thr191, Gln229, Lys246, and Lys255.

Belongs to the FPP/GGPP synthase family. Homodimer. Mg(2+) is required as a cofactor. Mostly expressed in roots and seeds, and to a lower extent, in leaves and stems.

The protein resides in the cytoplasm. The enzyme catalyses isopentenyl diphosphate + dimethylallyl diphosphate = (2E)-geranyl diphosphate + diphosphate. It carries out the reaction isopentenyl diphosphate + (2E)-geranyl diphosphate = (2E,6E)-farnesyl diphosphate + diphosphate. Its pathway is isoprenoid biosynthesis; farnesyl diphosphate biosynthesis; farnesyl diphosphate from geranyl diphosphate and isopentenyl diphosphate: step 1/1. It functions in the pathway isoprenoid biosynthesis; geranyl diphosphate biosynthesis; geranyl diphosphate from dimethylallyl diphosphate and isopentenyl diphosphate: step 1/1. Stimulated by methyl jasmonate (MeJA). Catalyzes the sequential condensation of isopentenyl pyrophosphate with the allylic pyrophosphates, dimethylallyl pyrophosphate, and then with the resultant geranylpyrophosphate to the ultimate product farnesyl pyrophosphate. Component of the triterpene saponins (e.g. ginsenosides or panaxosides) and phytosterols biosynthetic pathways. Promotes the accumulation of ginsenosides. This is Farnesyl pyrophosphate synthase from Panax ginseng (Korean ginseng).